The following is a 71-amino-acid chain: Phosphatidylinositol N-acetylglucosaminyltransferase subunit Y (71 aa).

Topologically, residues 1 to 3 (MFL) are cytoplasmic. Residues 4 to 26 (SLPTLTVLIPLVSLAGLFYSASV) form a helical membrane-spanning segment. The Lumenal portion of the chain corresponds to 27–44 (EENFPQGCTSTASLCFYS). The helical transmembrane segment at 45–65 (LLLPITIPVYVFFHLWTWMGI) threads the bilayer. The Cytoplasmic portion of the chain corresponds to 66–71 (KLFRHN).

As to quaternary structure, component of the glycosylphosphatidylinositol-N-acetylglucosaminyltransferase (GPI-GnT) complex composed at least by PIGA, PIGC, PIGH, PIGP, PIGQ, PIGY and DPM2. Interacts directly with PIGA; this interaction regulates glycosylphosphatidylinositol-N-acetylglucosaminyltransferase activity. Does not interact with Ras proteins.

The protein resides in the endoplasmic reticulum membrane. It functions in the pathway glycolipid biosynthesis; glycosylphosphatidylinositol-anchor biosynthesis. In terms of biological role, part of the glycosylphosphatidylinositol-N-acetylglucosaminyltransferase (GPI-GnT) complex that catalyzes the transfer of N-acetylglucosamine from UDP-N-acetylglucosamine to phosphatidylinositol and participates in the first step of GPI biosynthesis. May act by regulating the catalytic subunit PIGA. The protein is Phosphatidylinositol N-acetylglucosaminyltransferase subunit Y of Homo sapiens (Human).